Here is a 336-residue protein sequence, read N- to C-terminus: MNKADYKGVWVFAEQRDGELQKVSLELLGKGKEMAEKLGVELTAVLLGHNTEKMSKDLLSHGADKVLAADNELLAHFSTDGYAKVICDLVNERKPEILFIGATFIGRDLGPRIAARLSTGLTADCTSLDIDVENRDLLATRPAFGGNLIATIVCSDHRPQMATVRPGVFEKLPVNDANVSDDKIEKVAIKLTASDIRTKVSKVVKLAKDIADIGEAKVLVAGGRGVGSKENFEKLEELASLLGGTIAASRAAIEKEWVDKDLQVGQTGKTVRPTLYIACGISGAIQHLAGMQDSDYIIAINKDVEAPIMKVADLAIVGDVNKVVPELIAQVKAANN.

275–303 (LYIACGISGAIQHLAGMQDSDYIIAINKD) lines the FAD pocket.

Belongs to the ETF alpha-subunit/FixB family. Heterodimer of an alpha and a beta subunit. FAD serves as cofactor.

Its function is as follows. The electron transfer flavoprotein serves as a specific electron acceptor for other dehydrogenases. It transfers the electrons to the main respiratory chain via ETF-ubiquinone oxidoreductase (ETF dehydrogenase). The sequence is that of Electron transfer flavoprotein subunit alpha (etfA) from Clostridium acetobutylicum (strain ATCC 824 / DSM 792 / JCM 1419 / IAM 19013 / LMG 5710 / NBRC 13948 / NRRL B-527 / VKM B-1787 / 2291 / W).